Consider the following 73-residue polypeptide: Photosystem I reaction center subunit IV (73 aa).

It belongs to the PsaE family.

It is found in the cellular thylakoid membrane. Its function is as follows. Stabilizes the interaction between PsaC and the PSI core, assists the docking of the ferredoxin to PSI and interacts with ferredoxin-NADP oxidoreductase. In Synechococcus sp. (strain JA-3-3Ab) (Cyanobacteria bacterium Yellowstone A-Prime), this protein is Photosystem I reaction center subunit IV.